Here is a 156-residue protein sequence, read N- to C-terminus: ATP synthase subunit b (156 aa).

A helical transmembrane segment spans residues 7–27; it reads LIGQAIWFALFVFFCMKFVWP.

The protein belongs to the ATPase B chain family. F-type ATPases have 2 components, F(1) - the catalytic core - and F(0) - the membrane proton channel. F(1) has five subunits: alpha(3), beta(3), gamma(1), delta(1), epsilon(1). F(0) has three main subunits: a(1), b(2) and c(10-14). The alpha and beta chains form an alternating ring which encloses part of the gamma chain. F(1) is attached to F(0) by a central stalk formed by the gamma and epsilon chains, while a peripheral stalk is formed by the delta and b chains.

The protein localises to the cell inner membrane. F(1)F(0) ATP synthase produces ATP from ADP in the presence of a proton or sodium gradient. F-type ATPases consist of two structural domains, F(1) containing the extramembraneous catalytic core and F(0) containing the membrane proton channel, linked together by a central stalk and a peripheral stalk. During catalysis, ATP synthesis in the catalytic domain of F(1) is coupled via a rotary mechanism of the central stalk subunits to proton translocation. Functionally, component of the F(0) channel, it forms part of the peripheral stalk, linking F(1) to F(0). This Alcanivorax borkumensis (strain ATCC 700651 / DSM 11573 / NCIMB 13689 / SK2) protein is ATP synthase subunit b.